A 284-amino-acid chain; its full sequence is MDISNLPPHIRQQILGLISKPQQNNDESSSSNNKNNLINNEKVSNVLIDLTSNLKIENFKIFNKESLNQLEKKGYLIIDNFLNDLNKINLIYDESYNQFKENKLIEAGMNKGTDKWKDKSIRGDYIQWIHRDSNSRIQDKDLSSTIRNINYLLDKLDLIKNEFDNVIPNFNSIKTQTQLAVYLNGGRYIKHRDSFYSSESLTISRRITMIYYVNKDWKKGDGGELRLYTNNPNNTNQKELKQTEEFIDIEPIADRLLIFLSPFLEHEVLQCNFEPRIAITTWIY.

The 116-residue stretch at Asn169–Tyr284 folds into the Fe2OG dioxygenase domain. The Fe cation site is built by His191, Asp193, and His266. Arg276 contributes to the 2-oxoglutarate binding site.

It belongs to the P4HA family. As to quaternary structure, heterotetramer of two alpha-1 chains and two beta chains (the beta chain is the multi-functional PDI). The cofactor is Fe(2+). L-ascorbate serves as cofactor.

Its subcellular location is the cytoplasm. It catalyses the reaction L-prolyl-[Skp1 protein] + 2-oxoglutarate + O2 = trans-4-hydroxy-L-prolyl-[Skp1 protein] + succinate + CO2. Its activity is regulated as follows. Inhibited by the prolyl-hydroxylase inhibitors alpha,alpha'-dipyridyl and ethyl 3,4-dihydroxybenzoate. Catalyzes the post-translational formation of 4-hydroxyproline. Probably hydroxylates skp1 on Pro-143. This chain is Prolyl 4-hydroxylase subunit alpha (phyA), found in Dictyostelium discoideum (Social amoeba).